We begin with the raw amino-acid sequence, 402 residues long: NADH-quinone oxidoreductase subunit D 2 (402 aa).

It belongs to the complex I 49 kDa subunit family. As to quaternary structure, NDH-1 is composed of 14 different subunits. Subunits NuoB, C, D, E, F, and G constitute the peripheral sector of the complex.

Its subcellular location is the cell inner membrane. It carries out the reaction a quinone + NADH + 5 H(+)(in) = a quinol + NAD(+) + 4 H(+)(out). NDH-1 shuttles electrons from NADH, via FMN and iron-sulfur (Fe-S) centers, to quinones in the respiratory chain. The immediate electron acceptor for the enzyme in this species is believed to be ubiquinone. Couples the redox reaction to proton translocation (for every two electrons transferred, four hydrogen ions are translocated across the cytoplasmic membrane), and thus conserves the redox energy in a proton gradient. This chain is NADH-quinone oxidoreductase subunit D 2, found in Nitrobacter hamburgensis (strain DSM 10229 / NCIMB 13809 / X14).